Here is a 487-residue protein sequence, read N- to C-terminus: Histamine H1 receptor (487 aa).

Residues 1 to 29 (MSLPNSSCLLEDKMCESNKTTMASPQLMP) are Extracellular-facing. N5 and N18 each carry an N-linked (GlcNAc...) asparagine glycan. Residues 30 to 50 (LVVVLSTICLVTVGLNLLVLY) traverse the membrane as a helical segment. The Cytoplasmic segment spans residues 51–64 (AVRSERKLHTVGNL). The chain crosses the membrane as a helical span at residues 65–89 (YIVSLSVADLIVGAVVMPMNILYLL). The Extracellular segment spans residues 90–97 (MSKWSLGR). A helical transmembrane segment spans residues 98-123 (PLCLFWLSMDYVASTASIFSVFILCI). C100 and C180 are oxidised to a cystine. Histamine is bound by residues D107 and T112. The important for agonist binding stretch occupies residues 107–112 (DYVAST). Residues 124 to 144 (DRYRSVQQPLRYLKYRTKTRA) are Cytoplasmic-facing. Residues T140 and T142 each carry the phosphothreonine modification. Residues 145–164 (SATILGAWFLSFLWVIPILG) form a helical membrane-spanning segment. At 165–188 (WNHFMQQTSVRREDKCETDFYDVT) the chain is on the extracellular side. The chain crosses the membrane as a helical span at residues 189–211 (WFKVMTAIINFYLPTLLMLWFYA). N198 contributes to the histamine binding site. Residues 212-416 (KIYKAVRQHC…MNRERKAAKQ (205 aa)) are Cytoplasmic-facing. S230 is modified (phosphoserine). Positions 238-261 (KLRPENPKGDAKKPGKESPWEVLK) are enriched in basic and acidic residues. The segment at 238–292 (KLRPENPKGDAKKPGKESPWEVLKRKPKDAGGGSVLKSPSQTPKEMKSPVVFSQE) is disordered. Residue T279 is modified to Phosphothreonine. 2 positions are modified to phosphoserine: S344 and S347. The segment at 345-377 (EISEDQMLGDSQSFSRTDSDTTTETASGKGKLR) is disordered. Polar residues predominate over residues 353–370 (GDSQSFSRTDSDTTTETA). 3 positions are modified to phosphoserine: S380, S396, and S398. A helical membrane pass occupies residues 417-440 (LGFIMAAFILCWIPYFIFFMVIAF). The tract at residues 424-428 (FILCW) is important for agonist binding. A histamine-binding site is contributed by Y431. A disulfide bond links C441 and C444. Over 441–446 (CKNCCN) the chain is Extracellular. Residues 447-469 (EHLHMFTIWLGYINSTLNPLIYP) form a helical membrane-spanning segment. The Cytoplasmic segment spans residues 470–487 (LCNENFKKTFKRILHIRS).

The protein belongs to the G-protein coupled receptor 1 family. In terms of processing, phosphorylation at sites in the second and third cytoplasmic loops independently contribute to agonist-induced receptor down-regulation.

The protein resides in the cell membrane. Its function is as follows. G-protein-coupled receptor for histamine, a biogenic amine that functions as an immune modulator and a neurotransmitter. Through the H1 receptor, histamine mediates the contraction of smooth muscles and increases capillary permeability due to contraction of terminal venules. Also mediates neurotransmission in the central nervous system and thereby regulates circadian rhythms, emotional and locomotor activities as well as cognitive functions. The polypeptide is Histamine H1 receptor (Gorilla gorilla gorilla (Western lowland gorilla)).